Consider the following 412-residue polypeptide: Adenosine receptor A2a (412 aa).

Topologically, residues Met-1–Trp-7 are extracellular. A helical membrane pass occupies residues Val-8–Trp-32. Residues Leu-33–Asn-42 lie on the Cytoplasmic side of the membrane. Residues Tyr-43–Ile-66 traverse the membrane as a helical segment. Over Ser-67–Cys-77 the chain is Extracellular. 3 disulfides stabilise this stretch: Cys-71–Cys-159, Cys-74–Cys-146, and Cys-77–Cys-166. A helical transmembrane segment spans residues Leu-78 to Ile-100. Over Asp-101–Arg-120 the chain is Cytoplasmic. A helical transmembrane segment spans residues Ala-121–Trp-143. The Extracellular portion of the chain corresponds to Asn-144–Pro-173. N-linked (GlcNAc...) asparagine glycosylation is found at Asn-145 and Asn-154. Glu-169 lines the adenosine pocket. The chain crosses the membrane as a helical span at residues Met-174–Leu-198. The Cytoplasmic portion of the chain corresponds to Arg-199–Ser-234. Residues Leu-235–Phe-258 traverse the membrane as a helical segment. Asn-253 contacts adenosine. Cys-259 and Cys-262 are oxidised to a cystine. The Extracellular segment spans residues Cys-259–Pro-266. The helical transmembrane segment at Leu-267–Tyr-290 threads the bilayer. Residues Ser-277 and His-278 each coordinate adenosine. The Cytoplasmic portion of the chain corresponds to Arg-291 to Ser-412. A disordered region spans residues Gly-392–Ser-412.

Belongs to the G-protein coupled receptor 1 family. Interacts (via cytoplasmic C-terminal domain) with USP4; the interaction is direct. May interact with DRD4. Interacts with NECAB2. Interacts (via cytoplasmic C-terminal domain) with GAS2L2; interaction enhances receptor-mediated adenylyl cyclase activity. In terms of processing, ubiquitinated. Deubiquitinated by USP4; leading to stabilization and expression at the cell surface.

It is found in the cell membrane. Receptor for adenosine. The activity of this receptor is mediated by G proteins which activate adenylyl cyclase. This chain is Adenosine receptor A2a (ADORA2A), found in Canis lupus familiaris (Dog).